A 382-amino-acid polypeptide reads, in one-letter code: Elloramycin glycosyltransferase ElmGT (382 aa).

Belongs to the glycosyltransferase 28 family.

It catalyses the reaction 8-demethyltetracenomycin C + dTDP-beta-L-rhamnose = 8-demethyl-8-alpha-L-rhamnosyl-tetracenomycin C + dTDP + H(+). Its pathway is antibiotic biosynthesis. Glycosyltransferase that transfers an L-rhamnose moiety from dTDP-L-rhamnose to the elloramycin aglycone 8-demethyl-tetracenomycin C (8DMTC) in elloramycin biosynthesis, an antitumor polyketide. Possesses donor substrate flexibility: able to transfer at least 11 different sugars to 8DMTC, such as NDP-D-glucose, as well as NDP-L-digitoxose, including both L- and D-isomeric forms of some sugars. The protein is Elloramycin glycosyltransferase ElmGT of Streptomyces olivaceus.